The following is a 200-amino-acid chain: NAD--protein ADP-ribosyltransferase modA (200 aa).

Arginine 72 provides a ligand contact to NAD(+). Glutamate 165 is an active-site residue.

Belongs to the Tevenvirinae NAD--protein ADP-ribosyltransferase modA family.

Its subcellular location is the virion. The enzyme catalyses L-arginyl-[protein] + NAD(+) = N(omega)-(ADP-D-ribosyl)-L-arginyl-[protein] + nicotinamide + H(+). Its function is as follows. ADP-ribosyltransferase that efficiently ADP-ribosylates both alpha subunits of host RNA polymerase RPOA. The ModA-induced ADP-ribosylation of RPOA alpha subunits inhibits transcription from viral early promoters. This is NAD--protein ADP-ribosyltransferase modA from Enterobacteria phage T4 (Bacteriophage T4).